The following is a 164-amino-acid chain: Biogenesis of lysosome-related organelles complex 1 subunit 5 (164 aa).

Positions 36-91 (EGKRNDRELERLRESEQKIRQVQEEIPKCITESVKLKDLLEELKVAREKCHEILVK) form a coiled coil.

The protein belongs to the BLOC1S5 family. Component of the biogenesis of lysosome-related organelles complex 1 (BLOC-1).

Its function is as follows. Component of the BLOC-1 complex, a complex that is required for normal biogenesis of lysosome-related organelles (LRO). May play a role in intracellular vesicle trafficking. This is Biogenesis of lysosome-related organelles complex 1 subunit 5 (bloc1s5) from Nematostella vectensis (Starlet sea anemone).